The following is a 1065-amino-acid chain: Probable arabinosyltransferase B (1065 aa).

12 helical membrane-spanning segments follow: residues 15 to 37 (WVAT…LPVV), 204 to 226 (LKLA…LWRL), 241 to 263 (NWRT…HVIG), 394 to 413 (YSRL…TLGV), 417 to 436 (GLIA…RILV), 441 to 463 (VVGT…TVVF), 510 to 527 (FGFL…FIML), 540 to 557 (AWRL…LMFT), 567 to 589 (LFAA…AVLG), 596 to 618 (AFLA…WWYV), 633 to 655 (GGIT…AIWL), and 667 to 689 (LARA…VFIA).

It belongs to the emb family.

The protein resides in the cell membrane. In terms of biological role, arabinosyl transferase responsible for the polymerization of arabinose into the arabinan of arabinogalactan. The protein is Probable arabinosyltransferase B (embB) of Mycobacterium avium.